The chain runs to 418 residues: UDP-glucuronic acid decarboxylase 1 (418 aa).

The Cytoplasmic segment spans residues 1 to 17 (MMRMSWMVTVINRRMMK). A helical; Signal-anchor for type II membrane protein membrane pass occupies residues 18 to 38 (ILIALALIAYIASVWGTYANM). At 39-418 (RSIQEHGEMK…RMKKGRPRHN (380 aa)) the chain is on the lumenal side. NAD(+)-binding residues include G96, F97, V98, D117, N118, F120, T121, G122, D142, and V143. 2 residues coordinate UDP-alpha-D-glucuronate: L147 and Y148. Residues L157 and S159 each contribute to the NAD(+) site. Position 175 (K175) interacts with UDP-alpha-D-glucuronate. T176 contributes to the NAD(+) binding site. Residues N183, G186, K189, and R190 each coordinate UDP-alpha-D-glucuronate. Positions 198, 229, and 233 each coordinate NAD(+). Catalysis depends on Y229, which acts as the Proton acceptor. UDP-alpha-D-glucuronate-binding residues include Y243, Q246, and E247. Positions 259, 265, and 270 each coordinate NAD(+). Residues N314 and N383 are each glycosylated (N-linked (GlcNAc...) asparagine). The disordered stretch occupies residues 397 to 418 (ANNQYIPKPKAARMKKGRPRHN). A compositionally biased stretch (basic residues) spans 406 to 418 (KAARMKKGRPRHN).

This sequence belongs to the NAD(P)-dependent epimerase/dehydratase family. UDP-glucuronic acid decarboxylase subfamily. Homodimer and homotetramer. The cofactor is NAD(+).

It localises to the golgi apparatus. The protein resides in the golgi stack membrane. It catalyses the reaction UDP-alpha-D-glucuronate + H(+) = UDP-alpha-D-xylose + CO2. The protein operates within nucleotide-sugar biosynthesis; UDP-alpha-D-xylose biosynthesis; UDP-alpha-D-xylose from UDP-alpha-D-glucuronate: step 1/1. Its function is as follows. Catalyzes the NAD-dependent decarboxylation of UDP-glucuronic acid to UDP-xylose. Necessary for the biosynthesis of the core tetrasaccharide in glycosaminoglycan biosynthesis. Essential during embryogenesis for craniofacial development. The protein is UDP-glucuronic acid decarboxylase 1 of Danio rerio (Zebrafish).